The following is a 1638-amino-acid chain: Ciliary rootlet coiled-coil protein 2 (1638 aa).

Over residues 1–20 the composition is skewed to polar residues; sequence MSSTSSNPDDGDTTEQSQLG. 4 disordered regions span residues 1-21, 39-92, 396-423, and 1168-1213; these read MSSTSSNPDDGDTTEQSQLGL, REDR…REES, ARLRSPPRSVSPHQRMSPARTSSPTSLH, and TRRK…NLQE. Low complexity predominate over residues 67-82; the sequence is SSSLGEEPLSGLREPP. Residues 85–144 are a coiled coil; it reads TSHAREESELLQEELTRLEDLLAQADAEREELASRCHMVSQRLQARLDTTEARLRKSELE. The span at 406 to 421 shows a compositional bias: polar residues; sequence SPHQRMSPARTSSPTS. Coiled coils occupy residues 426–1234 and 1281–1315; these read LQAV…VQKE and LQEASNQADSLQRSLDNACSRVHVLEQELAKAEGA. The segment covering 1180 to 1193 has biased composition (basic and acidic residues); sequence RTLEAENQRKRQEV. Disordered stretches follow at residues 1338–1383 and 1506–1551; these read RNLL…VPVD and ALEE…QTTS. Residues 1349-1371 are compositionally biased toward polar residues; sequence SPTTGSSQTRPGRQRTSPPTRSY. Coiled coils occupy residues 1412-1506 and 1542-1576; these read RDNS…LRQA and RRALREQTTSLRTERARLQGELAALRTRLIQTEQE.

It belongs to the rootletin family.

This Mus musculus (Mouse) protein is Ciliary rootlet coiled-coil protein 2.